A 682-amino-acid chain; its full sequence is Potassium-transporting ATPase ATP-binding subunit (682 aa).

4 helical membrane passes run 34–54 (PVMF…IAMA), 62–82 (ALFS…ANFA), 219–239 (IALT…TATL), and 254–274 (VLVA…LSAI). The active-site 4-aspartylphosphate intermediate is Asp307. ATP-binding positions include Asp344, Glu348, 377–384 (FTAQSRMS), and Lys395. Positions 518 and 522 each coordinate Mg(2+). Helical transmembrane passes span 588 to 608 (FAII…LNIM), 616 to 636 (AILS…PLAL), and 656 to 676 (IYGL…DLLL).

The protein belongs to the cation transport ATPase (P-type) (TC 3.A.3) family. Type IA subfamily. The system is composed of three essential subunits: KdpA, KdpB and KdpC.

It localises to the cell inner membrane. The enzyme catalyses K(+)(out) + ATP + H2O = K(+)(in) + ADP + phosphate + H(+). Functionally, part of the high-affinity ATP-driven potassium transport (or Kdp) system, which catalyzes the hydrolysis of ATP coupled with the electrogenic transport of potassium into the cytoplasm. This subunit is responsible for energy coupling to the transport system and for the release of the potassium ions to the cytoplasm. This is Potassium-transporting ATPase ATP-binding subunit from Escherichia coli (strain ATCC 8739 / DSM 1576 / NBRC 3972 / NCIMB 8545 / WDCM 00012 / Crooks).